Consider the following 707-residue polypeptide: DCC-interacting protein 13-alpha (707 aa).

The tract at residues 1–428 (MPGIDKLPIE…PPTARTSSSG (428 aa)) is required for RAB5A binding. The 266-residue stretch at 3–268 (GIDKLPIEET…DPLYLPDPDP (266 aa)) folds into the BAR domain. Residues 234–257 (QNVRREMDGDVETMQQTIEDLEVA) are a coiled coil. The PH domain occupies 277–375 (LTRKAGYLNA…WICTINNISK (99 aa)). Disordered regions lie at residues 397–433 (AVTP…LGSE), 466–490 (GQAK…STKS), and 636–707 (EKQK…ESEA). At Thr399 the chain carries Phosphothreonine. The residue at position 401 (Ser401) is a Phosphoserine. The F&amp;H motif lies at 403 to 414 (SFQQRHESLRPG). Position 410 is a phosphoserine; by PKA (Ser410). The PID domain occupies 495-655 (SILHQLFIVR…EKQQKELSKQ (161 aa)). Positions 620 to 670 (LAKQIALHAELDRRASEKQKEIERVKEKQQKELSKQKQIEKDLEEQSRLIA) form a coiled coil. A compositionally biased stretch (basic and acidic residues) spans 636 to 666 (EKQKEIERVKEKQQKELSKQKQIEKDLEEQS). Residues 679–691 (GSEGQLVLSSSQS) show a composition bias toward low complexity. 2 positions are modified to phosphoserine: Ser691 and Ser694. Basic and acidic residues predominate over residues 698–707 (EEGKKRESEA).

As to quaternary structure, homodimer. Binds RAB5A/Rab5 through an N-terminal domain. This interaction is essential for its recruitment to endosomal membranes as well as its role in cell proliferation. Binds DCC and the catalytic domain of the inactive form of AKT2 through its PID domain. Binds PIK3CA and subunits of the NuRD/MeCP1 complex. Interacts with OCRL and INPP5B. Interacts with NTRK2. Interacts with APPL2; interaction is independent of follicle stimulating hormone stimulation; interaction is decreased by adiponectin in a time-dependent manner. Forms a complex with APPL2 and RUVBL2. Forms a complex comprising APPL2, RUVBL2, CTNNB1, HDAC1 and HDAC2; interaction reduces interaction between CTNNB1, HDAC1, HDAC2 and RUVBL2 leading to the decrease of deacetylase activity of this complex; affects the recruitment of repressive complexes to the Wnt target genes. Interacts with ANXA2. Interacts with TGFBR1; interaction is TGF beta dependent; mediates trafficking of the TGFBR1 from the endosomes to the nucleus via microtubules in a TRAF6-dependent manner. Interacts with PRKCZ. Interacts with PIK3R1 and APPL2. Interacts with ADIPOR1; ADIPOQ enhances this interaction; inhibites adiponectin-stimulated binding of APPL2 to ADIPOR1. Phosphorylation at Ser-410 by PKA severely impairs binding to OCRL. As to expression, expressed in insulin-target tissues including skeletal muscle, liver, fat, and brain.

The protein localises to the early endosome membrane. It is found in the nucleus. Its subcellular location is the cytoplasm. It localises to the endosome. The protein resides in the cell projection. The protein localises to the ruffle. It is found in the cytoplasmic vesicle. Its subcellular location is the phagosome. Its function is as follows. Multifunctional adapter protein that binds to various membrane receptors, nuclear factors and signaling proteins to regulate many processes, such as cell proliferation, immune response, endosomal trafficking and cell metabolism. Regulates signaling pathway leading to cell proliferation through interaction with RAB5A and subunits of the NuRD/MeCP1 complex. Functions as a positive regulator of innate immune response via activation of AKT1 signaling pathway by forming a complex with APPL1 and PIK3R1. Inhibits Fc-gamma receptor-mediated phagocytosis through PI3K/Akt signaling in macrophages. Regulates TLR4 signaling in activated macrophages. Involved in trafficking of the TGFBR1 from the endosomes to the nucleus via microtubules in a TRAF6-dependent manner. Plays a role in cell metabolism by regulating adiponecting and insulin signaling pathways. Required for fibroblast migration through HGF cell signaling. Positive regulator of beta-catenin/TCF-dependent transcription through direct interaction with RUVBL2/reptin resulting in the relief of RUVBL2-mediated repression of beta-catenin/TCF target genes by modulating the interactions within the beta-catenin-reptin-HDAC complex. The sequence is that of DCC-interacting protein 13-alpha from Mus musculus (Mouse).